The primary structure comprises 174 residues: UPF0316 protein lmo1776 (174 aa).

3 helical membrane passes run 4-24 (GIFI…IYTV), 36-56 (LAAL…SLVL), and 62-82 (IANV…GMKI).

It belongs to the UPF0316 family.

It is found in the cell membrane. The protein is UPF0316 protein lmo1776 of Listeria monocytogenes serovar 1/2a (strain ATCC BAA-679 / EGD-e).